The chain runs to 535 residues: Cytochrome P450 71C3 (535 aa).

A helical transmembrane segment spans residues 23–43 (QTLTLLLIAVPTVLLLLASLA). Cysteine 475 contacts heme.

It belongs to the cytochrome P450 family. Heme is required as a cofactor.

The protein resides in the membrane. It functions in the pathway secondary metabolite biosynthesis; 2,4-dihydroxy-1,4-benzoxazin-3-one biosynthesis; 2,4-dihydroxy-1,4-benzoxazin-3-one from indoleglycerol phosphate: step 5/5. Its function is as follows. Catalyzes the conversion of 2-hydroxy-1,4-benzoxazin-3-one (HBOA) to 2,4-dihydroxy-1,4-benzoxazin-3-one (DIBOA). The protein is Cytochrome P450 71C3 (CYP71C3) of Zea mays (Maize).